A 353-amino-acid polypeptide reads, in one-letter code: G-protein coupled estrogen receptor 1 (353 aa).

At 1–40 the chain is on the extracellular side; it reads MEEQTTNVIQIYVNGTEQFNASFDFNITDVKESTDTYEFY. The chain crosses the membrane as a helical span at residues 41–61; that stretch reads IIGLFLSCLYTIFLFPIGFIG. Over 62–81 the chain is Cytoplasmic; it reads NILILVVNLNHRERMTIPDL. The chain crosses the membrane as a helical span at residues 82–102; that stretch reads YFVNLAVADLILVADSLIEVF. The Extracellular segment spans residues 103–112; that stretch reads NLNEKYYDYA. A helical membrane pass occupies residues 113-133; it reads VLCTFMSLFLQVNMYSSIFFL. C115 and C192 are disulfide-bonded. Residues 134 to 160 are Cytoplasmic-facing; that stretch reads TWMSFDRYVALTSSMSSSPLRTMQHAK. The chain crosses the membrane as a helical span at residues 161-181; sequence LSCSLIWMASILATLLPFTIV. Over 182–202 the chain is Extracellular; it reads QTQHTGEVHFCFANVFEIQWL. Residues 203 to 223 traverse the membrane as a helical segment; the sequence is EVTIGFLIPFSIIGLCYSLIV. At 224 to 245 the chain is on the cytoplasmic side; it reads RTLMRAQKHKGLWPRRQKALRM. Residues 246–266 traverse the membrane as a helical segment; that stretch reads IVVVVLVFFICWLPENVFISI. The Extracellular portion of the chain corresponds to 267 to 292; that stretch reads QLLQGTADPSKRTDTTLWHDYPLTGH. Residues 293–313 form a helical membrane-spanning segment; that stretch reads IVNLAAFSNSCLNPIIYSFLG. The Cytoplasmic portion of the chain corresponds to 314–353; sequence ETFRDKLRLFIKRKASWSVVYRFCNHTLDLQIPVRSESEV.

The protein belongs to the G-protein coupled receptor 1 family. Homodimer. Heterodimer. Expressed in brain regions that are known to control reproduction and sex behavior. Expressed in ovary, muscle and intestine. Expressed in early germ cells of the testis, including the spermatogonia, spermatocytes, and somatic cells such as Sertoli cells.

It is found in the nucleus. The protein localises to the cytoplasm. Its subcellular location is the perinuclear region. It localises to the cytoskeleton. The protein resides in the cytoplasmic vesicle membrane. It is found in the cell membrane. The protein localises to the basolateral cell membrane. Its subcellular location is the endoplasmic reticulum membrane. It localises to the early endosome. The protein resides in the recycling endosome. It is found in the golgi apparatus. The protein localises to the trans-Golgi network. Its subcellular location is the golgi apparatus membrane. It localises to the cell projection. The protein resides in the dendrite. It is found in the dendritic spine membrane. The protein localises to the axon. Its subcellular location is the postsynaptic density. It localises to the mitochondrion membrane. Membrane G-protein coupled estrogen receptor that binds to 17-beta-estradiol (E2) with high affinity, leading to rapid and transient activation of numerous intracellular signaling pathways. Plays a role in the embryonic development of sensory and motor neurons. Specifically induces apoptosis and reduces proliferation of brain cells. Involved in maintenance of meiotic arrest in oocytes. This Danio rerio (Zebrafish) protein is G-protein coupled estrogen receptor 1 (gper1).